A 460-amino-acid chain; its full sequence is Probable carboxylesterase 11 (460 aa).

Composition is skewed to polar residues over residues 26 to 35 (QSSGDESSSD) and 132 to 145 (NSYG…SPEA). 2 disordered regions span residues 26–52 (QSSG…APNP) and 132–161 (NSYG…SSGG). The short motif at 173 to 175 (HGG) is the Involved in the stabilization of the negatively charged intermediate by the formation of the oxyanion hole element. Active-site residues include Ser289, Asp392, and His422.

It belongs to the 'GDXG' lipolytic enzyme family. In terms of tissue distribution, expressed in roots, leaves, stems, flowers and siliques.

It catalyses the reaction a carboxylic ester + H2O = an alcohol + a carboxylate + H(+). Its function is as follows. Carboxylesterase acting on esters with varying acyl chain length. This chain is Probable carboxylesterase 11 (CXE11), found in Arabidopsis thaliana (Mouse-ear cress).